An 81-amino-acid chain; its full sequence is Putative membrane protein insertion efficiency factor (81 aa).

It belongs to the UPF0161 family.

It localises to the cell inner membrane. Its function is as follows. Could be involved in insertion of integral membrane proteins into the membrane. This is Putative membrane protein insertion efficiency factor from Thermosipho melanesiensis (strain DSM 12029 / CIP 104789 / BI429).